The following is a 178-amino-acid chain: Nascent polypeptide-associated complex subunit alpha (178 aa).

Positions 20–84 (SKNEKKAREL…AKVDDMNKRI (65 aa)) constitute an NAC-A/B domain. The segment covering 87–104 (AQAQQEQQEALTKAAADA) has biased composition (low complexity). The disordered stretch occupies residues 87-142 (AQAQQEQQEALTKAAADAETADKSPESITNDLQNASLEDKTVEEDEGEVDETGLDS). Positions 112–122 (ESITNDLQNAS) are enriched in polar residues. A compositionally biased stretch (acidic residues) spans 127-139 (TVEEDEGEVDETG). One can recognise a UBA domain in the interval 140–178 (LDSKDIEIIVEQTQVSRAKAVKALRAHKGDMVNAIMELS).

Belongs to the NAC-alpha family. In terms of assembly, part of the nascent polypeptide-associated complex (NAC), consisting of EGD2 and EGD1. NAC associates with ribosomes via EGD1.

The protein resides in the cytoplasm. It localises to the nucleus. In terms of biological role, component of the nascent polypeptide-associated complex (NAC), a dynamic component of the ribosomal exit tunnel, protecting the emerging polypeptides from interaction with other cytoplasmic proteins to ensure appropriate nascent protein targeting. The NAC complex also promotes mitochondrial protein import by enhancing productive ribosome interactions with the outer mitochondrial membrane and blocks the inappropriate interaction of ribosomes translating non-secretory nascent polypeptides with translocation sites in the membrane of the endoplasmic reticulum. EGD2 may also be involved in transcription regulation. This Meyerozyma guilliermondii (strain ATCC 6260 / CBS 566 / DSM 6381 / JCM 1539 / NBRC 10279 / NRRL Y-324) (Yeast) protein is Nascent polypeptide-associated complex subunit alpha (EGD2).